We begin with the raw amino-acid sequence, 678 residues long: SPS-sensor component PTR3 (678 aa).

Disordered stretches follow at residues 111-158 (TGQG…SDPT) and 179-211 (ANTE…SSLL). Residues 127-144 (TSPSSSSLSLTPSRSSST) are compositionally biased toward low complexity. Residues 149–158 (ADNKTLSDPT) are compositionally biased toward basic and acidic residues. The segment covering 179 to 194 (ANTEVGSDHPLTTGTT) has biased composition (polar residues).

As to quaternary structure, homodimer. Component of the plasma membrane SPS (SSY1-PTR3-SSY5) amino acid sensor complex. Interacts directly with SSY1 and SSY5. Hyperphosphorylated in response to extracellular amino acids and dependent on the amino acid sensor component SSY1. Phosphorylation is positively regulated by casein kinases YCK1 and YCK2, and negatively regulated by phosphatase PP2A regulatory subunit RTS1.

It is found in the cell membrane. Component of the SPS-sensor system, which regulates the expression of several amino acid-metabolizing enzymes and amino acid- and peptide-permeases in response to extracellular amino acid levels by controlling the activity of two transcription factors, STP1 and STP2. This is SPS-sensor component PTR3 (PTR3) from Saccharomyces cerevisiae (strain ATCC 204508 / S288c) (Baker's yeast).